Reading from the N-terminus, the 182-residue chain is CASP-like protein 5B1 (182 aa).

A disordered region spans residues 1–20 (GDASHAVDHPIGGHPEHEHD). Residues 1-41 (GDASHAVDHPIGGHPEHEHDLREEEGPLIFPMKDLPGTPGT) lie on the Cytoplasmic side of the membrane. Residues 42-62 (VGGLALRMGQFIFAAASVVIM) traverse the membrane as a helical segment. The Extracellular portion of the chain corresponds to 63 to 73 (VTSDEFINFTA). Asn70 carries an N-linked (GlcNAc...) asparagine glycan. A helical transmembrane segment spans residues 74 to 94 (FCYLAAAMALQFLWSFVLATI). At 95-108 (DVYALLIKRGLPNS) the chain is on the cytoplasmic side. A helical transmembrane segment spans residues 109-129 (ILLSLFVVGDWVTATLSLAAA). Residues 130-159 (CSTAGITVLFDKDLNYCDQMHCRRYQLSAT) are Extracellular-facing. Residues 160–180 (MAFFSWVLIAISSLITLLLLV) traverse the membrane as a helical segment. Residues 181-182 (SE) lie on the Cytoplasmic side of the membrane.

The protein belongs to the Casparian strip membrane proteins (CASP) family. In terms of assembly, homodimer and heterodimers.

The protein localises to the cell membrane. This Picea sitchensis (Sitka spruce) protein is CASP-like protein 5B1.